An 84-amino-acid chain; its full sequence is Envelope small membrane protein (84 aa).

The Virion surface segment spans residues 1–18 (MFMADAYLADTVWYVGQI). The helical transmembrane segment at 19–39 (IFIVAICLLVIIVVVAFLATF) threads the bilayer. At 40–80 (KLCIQLCGMCNTLVLSPSIYVFNRGRQFYEFYNDVKPPVLD) the chain is on the intravirion side.

It belongs to the betacoronaviruses E protein family. Homopentamer. Interacts with membrane protein M in the budding compartment of the host cell, which is located between endoplasmic reticulum and the Golgi complex. Interacts with Nucleoprotein.

It localises to the host Golgi apparatus membrane. Its function is as follows. Plays a central role in virus morphogenesis and assembly. Acts as a viroporin and self-assembles in host membranes forming pentameric protein-lipid pores that allow ion transport. Also plays a role in the induction of apoptosis. The protein is Envelope small membrane protein of Porcine hemagglutinating encephalomyelitis virus (strain 67N) (HEV-67N).